A 472-amino-acid chain; its full sequence is Transcription factor TGAL1 (472 aa).

A disordered region spans residues 136 to 190; that stretch reads WGESTIADTSPRTDTSTDPDTDERNQMFEQGQLAAPTASDSSDRSKDKLDHKTLR. Over residues 143 to 153 the composition is skewed to low complexity; that stretch reads DTSPRTDTSTD. Residues 176 to 187 are compositionally biased toward basic and acidic residues; it reads SSDRSKDKLDHK. In terms of domain architecture, bZIP spans 185-229; sequence DHKTLRRLAQNREAARKSRLRKKAYIQNLESSRLKLTQIEQELQR. Positions 187–207 are basic motif; the sequence is KTLRRLAQNREAARKSRLRKK. The tract at residues 213 to 227 is leucine-zipper; the sequence is LESSRLKLTQIEQEL. Residues 252 to 469 enclose the DOG1 domain; the sequence is ALAFDMEYAR…RALSSLWLAR (218 aa).

This sequence belongs to the bZIP family. As to quaternary structure, isoforms 1 and 2 interact with NPR2/NH2. Isoform 2 interacts with NPR1/NH1 and NPR3/NH3.

The protein localises to the nucleus. Transcriptional regulator involved in defense response. The protein is Transcription factor TGAL1 of Oryza sativa subsp. japonica (Rice).